The chain runs to 364 residues: Alanine racemase (364 aa).

The Proton acceptor; specific for D-alanine role is filled by lysine 39. The residue at position 39 (lysine 39) is an N6-(pyridoxal phosphate)lysine. Arginine 137 contributes to the substrate binding site. The active-site Proton acceptor; specific for L-alanine is tyrosine 258. Residue methionine 306 participates in substrate binding.

It belongs to the alanine racemase family. Pyridoxal 5'-phosphate is required as a cofactor.

It catalyses the reaction L-alanine = D-alanine. The protein operates within amino-acid biosynthesis; D-alanine biosynthesis; D-alanine from L-alanine: step 1/1. Catalyzes the interconversion of L-alanine and D-alanine. May also act on other amino acids. This chain is Alanine racemase (alr), found in Methylobacterium sp. (strain 4-46).